Here is a 117-residue protein sequence, read N- to C-terminus: Large ribosomal subunit protein uL18 (117 aa).

It belongs to the universal ribosomal protein uL18 family. As to quaternary structure, part of the 50S ribosomal subunit; part of the 5S rRNA/L5/L18/L25 subcomplex. Contacts the 5S and 23S rRNAs.

In terms of biological role, this is one of the proteins that bind and probably mediate the attachment of the 5S RNA into the large ribosomal subunit, where it forms part of the central protuberance. The protein is Large ribosomal subunit protein uL18 of Yersinia enterocolitica serotype O:8 / biotype 1B (strain NCTC 13174 / 8081).